The chain runs to 103 residues: Major carboxysome shell protein CsoS1 (103 aa).

The region spanning A9–G94 is the BMC domain.

It belongs to the bacterial microcompartments protein family. CsoS1 subfamily. In terms of assembly, homohexamer with a small central pore. A CsoS1-CsoS1D-CsoS2 complex can be isolated following expression in E.coli. Forms a CsoS2-CsoS1-RuBisCO complex.

The protein resides in the carboxysome. The major shell protein of the carboxysome, a polyhedral inclusion where RuBisCO (ribulose bisphosphate carboxylase, ccbL-ccbS) is sequestered. Assembles into hexamers which make sheets that form the facets of the polyhedral carboxysome. There are estimated to be 538 CsoS1 hexamers per carboxysome; note this number includes the probable carboxysome shell vertex proteins CsoS4A and CsoS4B. This chain is Major carboxysome shell protein CsoS1, found in Prochlorococcus marinus subsp. pastoris (strain CCMP1986 / NIES-2087 / MED4).